A 457-amino-acid polypeptide reads, in one-letter code: uncharacterized protein (457 aa).

The region spanning 10 to 69 is the TRAM domain; sequence ALLQGQTVTVPITALAAGGDGIARLTDGRVLFVAGAVPGDTVEARLVHLKKDHGFGKILQ. C82, C88, C91, and C170 together coordinate [4Fe-4S] cluster. Residues Q294, Y323, E344, and D387 each contribute to the S-adenosyl-L-methionine site. The Nucleophile role is filled by C414.

It belongs to the class I-like SAM-binding methyltransferase superfamily. RNA M5U methyltransferase family.

This is an uncharacterized protein from Gloeobacter violaceus (strain ATCC 29082 / PCC 7421).